We begin with the raw amino-acid sequence, 2381 residues long: Nipped-B-like protein A (2381 aa).

One copy of the HEAT 1 repeat lies at Ser85–Ile124. Disordered stretches follow at residues Pro131–Gln211, His240–Gly289, and Leu329–Pro503. The segment covering Gly138–Pro158 has biased composition (polar residues). 2 stretches are compositionally biased toward basic and acidic residues: residues Gly254–Glu273 and Glu333–Lys355. The span at Gly373–Asn389 shows a compositional bias: gly residues. Positions Val451–Arg473 are enriched in basic and acidic residues. The short motif at Lys552–Ser565 is the PxVxL motif element. Basic and acidic residues predominate over residues Gln570–Ala580. Disordered regions lie at residues Gln570–Lys604 and Arg629–Ala708. Positions Ser581–Arg592 are enriched in polar residues. Composition is skewed to basic and acidic residues over residues Thr633 to Glu642 and Lys658 to Asp694. HEAT repeat units lie at residues Ser1299–Ser1337, Pro1375–Asn1413, Tyr1477–Lys1516, and Leu1843–Gly1881. Disordered regions lie at residues Ile2005–Asp2095 and Leu2228–Ala2271. A compositionally biased stretch (basic residues) spans Pro2006–Gln2021. Residues Glu2040–Asp2056 show a composition bias toward basic and acidic residues. Positions Glu2057–Glu2068 are enriched in acidic residues. A compositionally biased stretch (basic and acidic residues) spans Lys2077 to Glu2086.

This sequence belongs to the SCC2/Nipped-B family.

The protein resides in the nucleus. Its function is as follows. May play a structural role in chromatin. Involved in sister chromatid cohesion, possibly by facilitating the cohesin complex loading. Transcription factor, which may promote cortical neuron migration during brain development by regulating the transcription of crucial genes in this process. The sequence is that of Nipped-B-like protein A (nipbla) from Danio rerio (Zebrafish).